Reading from the N-terminus, the 398-residue chain is Phosphoglycerate kinase (398 aa).

Substrate contacts are provided by residues 22 to 24 (DFN), Arg38, 61 to 64 (HLGR), Arg120, and Arg153. Residues Lys206, Gly297, Glu328, and 354–357 (GGDT) each bind ATP.

This sequence belongs to the phosphoglycerate kinase family. In terms of assembly, monomer.

The protein localises to the cytoplasm. The enzyme catalyses (2R)-3-phosphoglycerate + ATP = (2R)-3-phospho-glyceroyl phosphate + ADP. The protein operates within carbohydrate degradation; glycolysis; pyruvate from D-glyceraldehyde 3-phosphate: step 2/5. This is Phosphoglycerate kinase from Nautilia profundicola (strain ATCC BAA-1463 / DSM 18972 / AmH).